Reading from the N-terminus, the 455-residue chain is Probable pectate lyase 6 (455 aa).

Positions 1–25 (MVNLGSYVFVFVALSLTVVVPSVQA) are cleaved as a signal peptide. N-linked (GlcNAc...) asparagine glycosylation is found at Asn55 and Asn75. Residues Asp247, Asp271, and Asp275 each coordinate Ca(2+). Residue Arg327 is part of the active site.

Belongs to the polysaccharide lyase 1 family. The cofactor is Ca(2+).

The catalysed reaction is Eliminative cleavage of (1-&gt;4)-alpha-D-galacturonan to give oligosaccharides with 4-deoxy-alpha-D-galact-4-enuronosyl groups at their non-reducing ends.. It participates in glycan metabolism; pectin degradation; 2-dehydro-3-deoxy-D-gluconate from pectin: step 2/5. The polypeptide is Probable pectate lyase 6 (Arabidopsis thaliana (Mouse-ear cress)).